A 230-amino-acid chain; its full sequence is Ribonuclease 3 (230 aa).

An RNase III domain is found at 1 to 134; it reads MKQLEELLST…FLGALLLDKG (134 aa). Glutamate 47 contributes to the Mg(2+) binding site. Residue aspartate 51 is part of the active site. 2 residues coordinate Mg(2+): aspartate 120 and glutamate 123. The active site involves glutamate 123. In terms of domain architecture, DRBM spans 160–229; it reads DYKTCLQEFL…AKNALAQLSE (70 aa).

The protein belongs to the ribonuclease III family. As to quaternary structure, homodimer. Mg(2+) serves as cofactor.

The protein resides in the cytoplasm. The catalysed reaction is Endonucleolytic cleavage to 5'-phosphomonoester.. Its function is as follows. Digests double-stranded RNA. Involved in the processing of primary rRNA transcript to yield the immediate precursors to the large and small rRNAs (23S and 16S). Processes some mRNAs, and tRNAs when they are encoded in the rRNA operon. Processes pre-crRNA and tracrRNA of type II CRISPR loci if present in the organism. This is Ribonuclease 3 from Streptococcus pyogenes serotype M2 (strain MGAS10270).